Reading from the N-terminus, the 345-residue chain is Baculoviral IAP repeat-containing protein 7-B (345 aa).

BIR repeat units lie at residues Arg-46–Gln-112 and Arg-154–Leu-219. Zn(2+) contacts are provided by Cys-188, Cys-191, His-208, and Cys-215. The residue at position 237 (Ser-237) is a Phosphoserine. Position 241 is a phosphoserine; by MAPK1 (Ser-241). At Ser-253 the chain carries Phosphoserine. Ser-257 carries the phosphoserine; by MAPK1 modification. Residues Thr-258–Glu-286 form a disordered region. The RING-type zinc-finger motif lies at Cys-298 to Arg-333.

This sequence belongs to the IAP family. Post-translationally, auto-ubiquitinated, and degraded in a 2-step mechanism; a caspase-independent first step and a caspase-dependent second step. In terms of processing, phosphorylated via MAPK-dependent and CDK-dependent pathways during oocyte maturation. Phosphorylation does not appear to affect caspase inhibition or autoubiquitination activity.

It localises to the cytoplasm. It carries out the reaction S-ubiquitinyl-[E2 ubiquitin-conjugating enzyme]-L-cysteine + [acceptor protein]-L-lysine = [E2 ubiquitin-conjugating enzyme]-L-cysteine + N(6)-ubiquitinyl-[acceptor protein]-L-lysine.. In terms of biological role, weak apoptotic suppressor. Has E3 ubiquitin-protein ligase activity. Weak inhibitor of caspase activity. In Xenopus laevis (African clawed frog), this protein is Baculoviral IAP repeat-containing protein 7-B (birc7-b).